The sequence spans 1234 residues: MVHPVQVGKRTRMSFSRLKEVGQMPNLIEVQLDSYDWFLKEGLQEVFDDINPIQDYTGNLNLEFVGYKLDLDSIKYSVEECKERDSTYAAPLKVKVRLLNKETGEIKEQEVFMGDFPLMTEQGTFIINGAERVIVSQLVRSPGVYYDMTVDKTGSKLFSATVIPNRGAWLEYETDSNNIIYVRIDKTRKLPITILARALGYGTDAEIIEFFGEDERLKATIEKDNTKTREEALLEIYKRLRPGEPPTVDSAESLIESLFFDAKRYDLSRVGRYKFNKKLAIHLRITNQIADQDIVNPQTGEILVQKGEKIDKDKAIEIQNCGINEVYIKIDDKSFKVIGNHFVDIHSLVPFDISDLNIKEYVFYPVLKEILDNYADEESIKEEIRKNIYRLIPKHIIREDIYATINYELGLSYDIGYKDDIDHLGNRRLRSVGELLQNQFRIGLSRMERVVKERMTIQDQEVITPQALINIRPVAASIKEFFGSSQLSQFMDQTNPLSELTHKRRLSALGPGGLSRERAGFEVRDVHHSHYGRMCPIETPEGPNIGLINSLATFAKVNEYGFIETPYRRIDPKNKRATNDIVYMTADEEDLYVIARSDEPIDENGYFIDDKVTVRAKEEVLVVPVSEVEYMDISPRQLVSVATAMIPFLENDDASRALMGSNMQRQAVPLLKPQAPIVGTGIEYKAATDSGVLPKAKNAGTVVYVSADEIRVRRDSDGGIDKYKLLKFKRSNQGTCINQRPIVSKGEVVAKETLLADGPSTDLGEIALGKNILMGFITWEGYNYEDAMLISEQLVKEDVFTSIHIEEYEAEARDTKLGPEEITRDIPNVGEEALKDIDERGIIRIGAEVRSGDILVGKVTPKGETELTAEERLLRAIFGEKAREVRDTSLRVPHGEAGIIVDVKIFTRENGDELPPGVNKLVRCYIAQKRKISVGDKMAGRHGNKGVISRVLPEEDMPFLPDGRPLQICLNPLGVPSRMNIGQVLEVHLGLAASKLGWHIATPVFDGAIESDIVDCLRKAGYSEDGKTVLYDGRTGEPFDNRVTVGYMYILKLAHLVDDKIHARSTGPYSLVTQQPLGGKAQFGGQRFGEMEVWALEAYGAAHTLQEILTVKSDDVVGRVKTYEAIVKGENIPEPGVPESFKVLIKELQALCLDVKVLNDDNQEIKLKESVDEDADELEVNIEGTENQPEEKEEKEEEKEDSDEYDDLREEDVEPDLEELSLDDLDLDDFGDEH.

Residues 1169-1234 (ESVDEDADEL…LDLDDFGDEH (66 aa)) form a disordered region. Acidic residues-rich tracts occupy residues 1171-1180 (VDEDADELEV) and 1191-1234 (EKEE…GDEH).

This sequence belongs to the RNA polymerase beta chain family. The RNAP catalytic core consists of 2 alpha, 1 beta, 1 beta' and 1 omega subunit. When a sigma factor is associated with the core the holoenzyme is formed, which can initiate transcription.

It carries out the reaction RNA(n) + a ribonucleoside 5'-triphosphate = RNA(n+1) + diphosphate. Its function is as follows. DNA-dependent RNA polymerase catalyzes the transcription of DNA into RNA using the four ribonucleoside triphosphates as substrates. The chain is DNA-directed RNA polymerase subunit beta from Clostridium botulinum (strain Langeland / NCTC 10281 / Type F).